We begin with the raw amino-acid sequence, 396 residues long: Putative pyridoxal phosphate-dependent acyltransferase (396 aa).

Pyridoxal 5'-phosphate is bound at residue 111–112 (GF). Histidine 136 contributes to the substrate binding site. Pyridoxal 5'-phosphate is bound by residues serine 186, 211-214 (DDAH), and 241-244 (TLSK). Residue lysine 244 is modified to N6-(pyridoxal phosphate)lysine. Threonine 358 serves as a coordination point for substrate.

The protein belongs to the class-II pyridoxal-phosphate-dependent aminotransferase family. In terms of assembly, homodimer. It depends on pyridoxal 5'-phosphate as a cofactor.

This is Putative pyridoxal phosphate-dependent acyltransferase from Bacillus cereus (strain ATCC 14579 / DSM 31 / CCUG 7414 / JCM 2152 / NBRC 15305 / NCIMB 9373 / NCTC 2599 / NRRL B-3711).